The chain runs to 384 residues: Guanine nucleotide-binding protein alpha-1 subunit (384 aa).

G2 carries N-myristoyl glycine lipidation. C5 is lipidated: S-palmitoyl cysteine. A G-alpha domain is found at 38–384 (HIQKLLLLGA…RRNLFEAGLL (347 aa)). The tract at residues 41–54 (KLLLLGAGESGKST) is G1 motif. 14 residues coordinate GTP: E49, S50, G51, K52, S53, T54, L188, Y189, T194, G222, N288, K289, D291, and A356. Residue S53 coordinates Mg(2+). Residues 186-194 (DVLYARVRT) are G2 motif. Position 194 (T194) interacts with Mg(2+). The G3 motif stretch occupies residues 215 to 224 (YRLFDVGGQR). The tract at residues 284 to 291 (MLFLNKFD) is G4 motif. The tract at residues 354 to 359 (TTALDQ) is G5 motif.

It belongs to the G-alpha family. G proteins are composed of 3 units; alpha, beta and gamma. The alpha chain contains the guanine nucleotide binding site. Mg(2+) is required as a cofactor.

Functionally, guanine nucleotide-binding proteins (G proteins) are involved as modulators or transducers in various transmembrane signaling systems. The sequence is that of Guanine nucleotide-binding protein alpha-1 subunit (GPA1) from Lupinus luteus (European yellow lupine).